Reading from the N-terminus, the 500-residue chain is L-arabinose isomerase (500 aa).

Mn(2+)-binding residues include glutamate 306, glutamate 333, histidine 350, and histidine 450.

This sequence belongs to the arabinose isomerase family. In terms of assembly, homohexamer. It depends on Mn(2+) as a cofactor.

The catalysed reaction is beta-L-arabinopyranose = L-ribulose. It functions in the pathway carbohydrate degradation; L-arabinose degradation via L-ribulose; D-xylulose 5-phosphate from L-arabinose (bacterial route): step 1/3. Functionally, catalyzes the conversion of L-arabinose to L-ribulose. This is L-arabinose isomerase from Enterobacter sp. (strain 638).